The primary structure comprises 405 residues: Alpha-1-antiproteinase S (405 aa).

A signal peptide spans 1-24; sequence MPSAIPRGLLLLAGLCCLVFGIMA. N-linked (GlcNAc...) asparagine glycans are attached at residues N57, N94, N157, and N258. Residues 360 to 379 form an RCL region; the sequence is GATMMEFMPMSLPEDLSFNK.

Belongs to the serpin family.

The protein resides in the secreted. In terms of biological role, inhibits elastase, chymotrypsin, cathepsin G, plasmin, and trypsin. This is Alpha-1-antiproteinase S from Cavia porcellus (Guinea pig).